A 246-amino-acid chain; its full sequence is MSGHSKWHNIQAKKGKTDAKRGKIFTKIGKELMVAVKNGGPSPETNNRLRDIIAKAKAANMPNDTITRSIKKASGELGSVNYENIIYEGYGPSGVAVIVETLTDNKNRSAGNVRSAFTKGGGNMGTQGCVGFMFQEKGEMVIEKADKDEDEMMMLALDAGAEDFNADEDEVFVVTTTPEDFGTVREALEAEGIEFLEADVKMIPDTYTAIDEADAKKFQKMLDLLEDDEDVQEVYHNAEFPEGWEE.

This sequence belongs to the TACO1 family.

It localises to the cytoplasm. The sequence is that of Probable transcriptional regulatory protein CLL_A1008 from Clostridium botulinum (strain Eklund 17B / Type B).